The chain runs to 186 residues: Ribosome maturation factor RimM (186 aa).

A PRC barrel domain is found at 93 to 168; that stretch reads EDDFYLVDLI…VLIDPPQEEN (76 aa). A disordered region spans residues 163–186; the sequence is PPQEENAPEFGRNELGHDDGGEAA. Residues 173–186 are compositionally biased toward basic and acidic residues; the sequence is GRNELGHDDGGEAA.

This sequence belongs to the RimM family. In terms of assembly, binds ribosomal protein uS19.

The protein resides in the cytoplasm. Its function is as follows. An accessory protein needed during the final step in the assembly of 30S ribosomal subunit, possibly for assembly of the head region. Essential for efficient processing of 16S rRNA. May be needed both before and after RbfA during the maturation of 16S rRNA. It has affinity for free ribosomal 30S subunits but not for 70S ribosomes. The protein is Ribosome maturation factor RimM of Granulibacter bethesdensis (strain ATCC BAA-1260 / CGDNIH1).